We begin with the raw amino-acid sequence, 273 residues long: Kit ligand (273 aa).

An N-terminal signal peptide occupies residues 1–25; the sequence is MKKTQTWIITCIYLQLLLFNPLVKT. Residues 26-214 are Extracellular-facing; that stretch reads KEICGNPVTD…AKAPEDSGLQ (189 aa). Disulfide bonds link cysteine 29/cysteine 114 and cysteine 68/cysteine 163. N-linked (GlcNAc...) asparagine glycosylation is found at asparagine 90, asparagine 97, asparagine 145, and asparagine 195. The disordered stretch occupies residues 190–210; the sequence is ASSLRNDSSSSNRKAAKAPED. The span at 191–202 shows a compositional bias: low complexity; that stretch reads SSLRNDSSSSNR. Residues 215 to 237 form a helical membrane-spanning segment; it reads WTAMALPALISLVIGFAFGALYW. Over 238–273 the chain is Cytoplasmic; that stretch reads KKKQSSLTRAVENIQINEEDNEISMLQQKEREFQEV.

This sequence belongs to the SCF family. As to quaternary structure, homodimer, non-covalently linked. Heterotetramer with KIT, binding two KIT molecules; thereby mediates KIT dimerization and subsequent activation by autophosphorylation. In terms of processing, a soluble form is produced by proteolytic processing of isoform 1 in the extracellular domain. As to expression, expressed in the cochlea.

Its subcellular location is the cell membrane. It is found in the cytoplasm. The protein resides in the cytoskeleton. The protein localises to the cell projection. It localises to the lamellipodium. Its subcellular location is the filopodium. It is found in the secreted. Ligand for the receptor-type protein-tyrosine kinase KIT. Plays an essential role in the regulation of cell survival and proliferation, hematopoiesis, stem cell maintenance, gametogenesis, mast cell development, migration and function, and in melanogenesis. KITLG/SCF binding can activate several signaling pathways. Promotes phosphorylation of PIK3R1, the regulatory subunit of phosphatidylinositol 3-kinase, and subsequent activation of the kinase AKT1. KITLG/SCF and KIT also transmit signals via GRB2 and activation of RAS, RAF1 and the MAP kinases MAPK1/ERK2 and/or MAPK3/ERK1. KITLG/SCF and KIT promote activation of STAT family members STAT1, STAT3 and STAT5. KITLG/SCF and KIT promote activation of PLCG1, leading to the production of the cellular signaling molecules diacylglycerol and inositol 1,4,5-trisphosphate. KITLG/SCF acts synergistically with other cytokines, probably interleukins. The chain is Kit ligand (Kitlg) from Mus musculus (Mouse).